The chain runs to 465 residues: ATP-dependent RNA helicase ddx19 (465 aa).

The segment covering 1-20 (MSEKETNTTSTENKEKEKQE) has biased composition (basic and acidic residues). The tract at residues 1 to 45 (MSEKETNTTSTENKEKEKQEQTNTNSTTESTNNQVDEEYERPGRS) is disordered. Residues 21–34 (QTNTNSTTESTNNQ) are compositionally biased toward low complexity. Positions 70–98 (KTFEELGLKPELLKGVYAMGYNKPSKIQE) match the Q motif motif. The 167-residue stretch at 102 to 268 (PIIIQSPNNL…KKIVQDPYTS (167 aa)) folds into the Helicase ATP-binding domain. 115–122 (SQSGTGKT) contacts ATP. The short motif at 215–218 (DEAD) is the DEAD box element. Residues 297–449 (ILSDIYGFIS…ELKSSEIESL (153 aa)) form the Helicase C-terminal domain.

The protein belongs to the DEAD box helicase family. DDX19/DBP5 subfamily.

The enzyme catalyses ATP + H2O = ADP + phosphate + H(+). In terms of biological role, ATP-binding RNA helicase required for normal differentiation and development. This chain is ATP-dependent RNA helicase ddx19 (helC), found in Dictyostelium discoideum (Social amoeba).